Reading from the N-terminus, the 402-residue chain is CinA-like protein (402 aa).

It belongs to the CinA family.

This chain is CinA-like protein, found in Fusobacterium nucleatum subsp. nucleatum (strain ATCC 25586 / DSM 15643 / BCRC 10681 / CIP 101130 / JCM 8532 / KCTC 2640 / LMG 13131 / VPI 4355).